The primary structure comprises 181 residues: Large ribosomal subunit protein uL6m (181 aa).

It belongs to the universal ribosomal protein uL6 family.

The protein resides in the mitochondrion. The protein is Large ribosomal subunit protein uL6m (RPL6) of Acanthamoeba castellanii (Amoeba).